Here is a 71-residue protein sequence, read N- to C-terminus: UPF0346 protein BCB4264_A2283 (71 aa).

Belongs to the UPF0346 family.

The protein is UPF0346 protein BCB4264_A2283 of Bacillus cereus (strain B4264).